A 636-amino-acid chain; its full sequence is Chaperone protein DnaK (636 aa).

The tract at residues 579 to 636 (ELYKNAAPPPGADGQQGADGQQGADGQQGADGQQGADGQQGADGQTTESSSNDETKTN) is disordered. The segment covering 590 to 623 (ADGQQGADGQQGADGQQGADGQQGADGQQGADGQ) has biased composition (low complexity).

The protein belongs to the heat shock protein 70 family.

In terms of biological role, acts as a chaperone. The polypeptide is Chaperone protein DnaK (Nitrosopumilus maritimus (strain SCM1)).